A 1205-amino-acid chain; its full sequence is cGMP-specific 3',5'-cyclic phosphodiesterase (1205 aa).

Residues 1-153 (MTDVSSPAGG…TKASTTASQQ (153 aa)) form a disordered region. Positions 18–32 (TTSSSPAATTSASSS) are enriched in low complexity. Over residues 33 to 48 (KPLTNGANKTTISTTA) the composition is skewed to polar residues. Positions 62-71 (GAIPASSSSG) are enriched in low complexity. Positions 83 to 94 (SNNNRPAATNRS) are enriched in polar residues. Positions 118–140 (SSSSPSQSPSQTQASIQTQTSQQ) are enriched in low complexity. GAF domains lie at 259–411 (DIDV…GIGI) and 443–624 (NLEC…GLGI). Positions 654 to 1052 (SQDQTEKLTQ…RNWQDLAEKV (399 aa)) constitute a PDEase domain. The active-site Proton donor is the histidine 730. Residues histidine 734, histidine 770, aspartate 771, and aspartate 956 each coordinate a divalent metal cation. Disordered stretches follow at residues 1093–1122 (QQSQ…TGAL) and 1152–1205 (SHVS…CALL). Composition is skewed to basic and acidic residues over residues 1098-1109 (GSEDSHTPEHQR) and 1152-1162 (SHVSEDMDDKS). Positions 1171–1191 (ASGSMGRMSASSSTSSAGGQM) are enriched in low complexity. The segment covering 1195–1205 (SKKRSKLCALL) has biased composition (basic residues). Cysteine 1202 is modified (cysteine methyl ester). Cysteine 1202 carries the S-farnesyl cysteine lipid modification. A propeptide spans 1203 to 1205 (ALL) (removed in mature form).

The protein belongs to the cyclic nucleotide phosphodiesterase family. Interacts with PrBP. The cofactor is a divalent metal cation.

It localises to the cell membrane. It catalyses the reaction 3',5'-cyclic GMP + H2O = GMP + H(+). Its function is as follows. Has a role regulating cGMP transport in Malpighian tubule principal cells. The chain is cGMP-specific 3',5'-cyclic phosphodiesterase from Drosophila sechellia (Fruit fly).